The chain runs to 301 residues: D-alanine--D-alanine ligase A (301 aa).

The ATP-grasp domain maps to Lys-96 to Glu-290. An ATP-binding site is contributed by Leu-123–Thr-178. Residues Asp-245, Glu-257, and Asn-259 each coordinate Mg(2+).

It belongs to the D-alanine--D-alanine ligase family. It depends on Mg(2+) as a cofactor. Mn(2+) serves as cofactor.

Its subcellular location is the cytoplasm. It catalyses the reaction 2 D-alanine + ATP = D-alanyl-D-alanine + ADP + phosphate + H(+). Its pathway is cell wall biogenesis; peptidoglycan biosynthesis. Functionally, cell wall formation. This is D-alanine--D-alanine ligase A from Bacillus cereus (strain ATCC 14579 / DSM 31 / CCUG 7414 / JCM 2152 / NBRC 15305 / NCIMB 9373 / NCTC 2599 / NRRL B-3711).